The primary structure comprises 386 residues: Diaminopimelate decarboxylase (386 aa).

Lysine 46 carries the N6-(pyridoxal phosphate)lysine modification. Pyridoxal 5'-phosphate-binding positions include glycine 214 and 246–249; that span reads EIGR. Substrate contacts are provided by arginine 249, arginine 285, and tyrosine 289. Cysteine 314 (proton donor) is an active-site residue. Substrate contacts are provided by glutamate 315 and tyrosine 343. Residue tyrosine 343 coordinates pyridoxal 5'-phosphate.

The protein belongs to the Orn/Lys/Arg decarboxylase class-II family. LysA subfamily. As to quaternary structure, homodimer. Pyridoxal 5'-phosphate is required as a cofactor.

It catalyses the reaction meso-2,6-diaminopimelate + H(+) = L-lysine + CO2. The protein operates within amino-acid biosynthesis; L-lysine biosynthesis via DAP pathway; L-lysine from DL-2,6-diaminopimelate: step 1/1. Specifically catalyzes the decarboxylation of meso-diaminopimelate (meso-DAP) to L-lysine. The sequence is that of Diaminopimelate decarboxylase from Thermotoga maritima (strain ATCC 43589 / DSM 3109 / JCM 10099 / NBRC 100826 / MSB8).